The primary structure comprises 313 residues: tRNA-cytidine(32) 2-sulfurtransferase (313 aa).

Positions 47–52 (SGGKDS) match the PP-loop motif motif. The [4Fe-4S] cluster site is built by cysteine 122, cysteine 125, and cysteine 213.

This sequence belongs to the TtcA family. As to quaternary structure, homodimer. Mg(2+) is required as a cofactor. It depends on [4Fe-4S] cluster as a cofactor.

The protein resides in the cytoplasm. The enzyme catalyses cytidine(32) in tRNA + S-sulfanyl-L-cysteinyl-[cysteine desulfurase] + AH2 + ATP = 2-thiocytidine(32) in tRNA + L-cysteinyl-[cysteine desulfurase] + A + AMP + diphosphate + H(+). Its pathway is tRNA modification. Catalyzes the ATP-dependent 2-thiolation of cytidine in position 32 of tRNA, to form 2-thiocytidine (s(2)C32). The sulfur atoms are provided by the cysteine/cysteine desulfurase (IscS) system. This is tRNA-cytidine(32) 2-sulfurtransferase from Yersinia enterocolitica serotype O:8 / biotype 1B (strain NCTC 13174 / 8081).